The chain runs to 325 residues: Aldo-keto reductase family 1 member A1 (325 aa).

At A2 the chain carries N-acetylalanine. Residue S4 is modified to Phosphoserine. Residues 11 to 20 (GQKMPLIGLG), T21, and W22 contribute to the NADP(+) site. Position 38 is a phosphoserine (S38). NADP(+) is bound at residue D45. Y50 serves as the catalytic Proton donor. N6-acetyllysine; alternate is present on K127. K127 carries the post-translational modification N6-succinyllysine; alternate. Position 145 is an N6-succinyllysine (K145). 13 residues coordinate NADP(+): S162, N163, S211, L213, S215, S216, K263, S264, I265, T266, R269, Q272, and N273. S211 carries the post-translational modification Phosphoserine.

The protein belongs to the aldo/keto reductase family.

Its subcellular location is the cytoplasm. It is found in the cytosol. It localises to the apical cell membrane. The catalysed reaction is a primary alcohol + NADP(+) = an aldehyde + NADPH + H(+). It carries out the reaction L-gulonate + NADP(+) = aldehydo-D-glucuronate + NADPH + H(+). The enzyme catalyses L-gulono-1,4-lactone + NADP(+) = D-glucurono-3,6-lactone + NADPH + H(+). It catalyses the reaction allyl alcohol + NADP(+) = acrolein + NADPH + H(+). The catalysed reaction is glycerol + NADP(+) = D-glyceraldehyde + NADPH + H(+). It carries out the reaction glycerol + NADP(+) = L-glyceraldehyde + NADPH + H(+). The enzyme catalyses hydroxyacetone + NADP(+) = methylglyoxal + NADPH + H(+). It catalyses the reaction 3-deoxyfructose + NADP(+) = 3-deoxyglucosone + NADPH + H(+). The catalysed reaction is (R)-mevalonate + NADP(+) = (R)-mevaldate + NADPH + H(+). It carries out the reaction pyridine 3-methanol + NADP(+) = pyridine-3-carbaldehyde + NADPH + H(+). The enzyme catalyses S-nitroso-CoA + NADPH + H(+) = sulfinamide-CoA + NADP(+). It catalyses the reaction S-nitrosoglutathione + NADPH + H(+) = S-(hydroxysulfenamide)glutathione + NADP(+). Catalyzes the NADPH-dependent reduction of a wide variety of carbonyl-containing compounds to their corresponding alcohols. Displays enzymatic activity towards endogenous metabolites such as aromatic and aliphatic aldehydes, ketones, monosaccharides and bile acids, with a preference for negatively charged substrates, such as glucuronate and succinic semialdehyde. Functions as a detoxifiying enzyme by reducing a range of toxic aldehydes. Reduces methylglyoxal and 3-deoxyglucosone, which are present at elevated levels under hyperglycemic conditions and are cytotoxic. Involved also in the detoxification of lipid-derived aldehydes like acrolein. Plays a role in the activation of procarcinogens, such as polycyclic aromatic hydrocarbon trans-dihydrodiols, and in the metabolism of various xenobiotics and drugs. Also acts as an inhibitor of protein S-nitrosylation by mediating degradation of S-nitroso-coenzyme A (S-nitroso-CoA), a cofactor required to S-nitrosylate proteins. S-nitroso-CoA reductase activity is involved in reprogramming intermediary metabolism in renal proximal tubules, notably by inhibiting protein S-nitrosylation of isoform 2 of PKM (PKM2). Also acts as a S-nitroso-glutathione reductase by catalyzing the NADPH-dependent reduction of S-nitrosoglutathione. Displays no reductase activity towards retinoids. This chain is Aldo-keto reductase family 1 member A1 (AKR1A1), found in Pongo abelii (Sumatran orangutan).